The chain runs to 417 residues: Cobalamin binding intrinsic factor (417 aa).

The N-terminal stretch at 1-18 (MAWLTLYLLSVLWAVAGT) is a signal peptide. 3 cysteine pairs are disulfide-bonded: C26-C246, C103-C288, and C143-C182. D171 provides a ligand contact to cob(II)alamin. The residue at position 191 (S191) is a Phosphoserine. 2 residues coordinate cob(II)alamin: D222 and Q270. N311 and N330 each carry an N-linked (GlcNAc...) asparagine glycan. Residues 365-370 (SWGLIV) and 386-395 (WEFLSGKTPL) contribute to the cob(II)alamin site. A glycan (N-linked (GlcNAc...) asparagine) is linked at N413.

Belongs to the eukaryotic cobalamin transport proteins family. In terms of assembly, interacts with CUBN (via CUB domains). Gastric mucosa.

Its subcellular location is the secreted. Promotes absorption of the essential vitamin cobalamin (Cbl) in the ileum. After interaction with CUBN, the CBLIF-cobalamin complex is internalized via receptor-mediated endocytosis. This Mus musculus (Mouse) protein is Cobalamin binding intrinsic factor (Cblif).